The following is a 151-amino-acid chain: Small ribosomal subunit protein uS15 (151 aa).

Basic residues predominate over residues 1–11; that stretch reads MPHRSRHKKGR. Residues 1–24 form a disordered region; that stretch reads MPHRSRHKKGRSSSVRPPHPTVPT.

It belongs to the universal ribosomal protein uS15 family. Part of the 30S ribosomal subunit.

In Pyrobaculum calidifontis (strain DSM 21063 / JCM 11548 / VA1), this protein is Small ribosomal subunit protein uS15.